A 155-amino-acid polypeptide reads, in one-letter code: Prespore-specific protein E (155 aa).

An N-terminal signal peptide occupies residues Met-1–Ala-20. Residues Asn-22, Asn-82, Asn-85, and Asn-102 are each glycosylated (N-linked (GlcNAc...) asparagine). Residue Ser-105 is glycosylated (O-linked (GlcNAc) serine). A lipid anchor (GPI-like-anchor amidated asparagine) is attached at Asn-133. Residues Ser-134–Leu-155 constitute a propeptide, removed in mature form.

In terms of processing, the GPI-like-anchor contains a phosphoceramide group, rather than a phosphatidyl group.

The protein localises to the cell membrane. The polypeptide is Prespore-specific protein E (pspE) (Dictyostelium discoideum (Social amoeba)).